A 101-amino-acid chain; its full sequence is Acylphosphatase (101 aa).

Residues 13–101 (RARILVRGVV…GEFRGFEIRY (89 aa)) form the Acylphosphatase-like domain. Residues Arg28 and Asn46 contribute to the active site.

The protein belongs to the acylphosphatase family.

The enzyme catalyses an acyl phosphate + H2O = a carboxylate + phosphate + H(+). The chain is Acylphosphatase (acyP) from Aeropyrum pernix (strain ATCC 700893 / DSM 11879 / JCM 9820 / NBRC 100138 / K1).